The primary structure comprises 1488 residues: Indigoidine synthase (1488 aa).

The adenylation stretch occupies residues 229-585 (KNRAQRHPEQ…GGDGVARGYL (357 aa)). The Carrier domain maps to 1137-1212 (APRNPLEHQV…KLAAWLSRAR (76 aa)). Serine 1172 is modified (O-(pantetheine 4'-phosphoryl)serine). Residues 1230–1346 (PIYCWPGLGG…ERVAAMNRKA (117 aa)) are thioesterase.

This sequence belongs to the ATP-dependent AMP-binding enzyme family. The cofactor is pantetheine 4'-phosphate.

It catalyses the reaction 2 FMN + 2 L-glutamine + 2 ATP + O2 = indigoidine + 2 FMNH2 + 2 AMP + 2 diphosphate + 2 H2O. It carries out the reaction FMN + L-glutamine + ATP = 3-amino-1,5-dihydropyridine-2,6-dione + FMNH2 + AMP + diphosphate. The enzyme catalyses 2 3-amino-1,5-dihydropyridine-2,6-dione + O2 = indigoidine + 2 H2O. The protein operates within pigment biosynthesis. Nonribosomal peptide synthetase involved in the biosynthesis of the blue pigment indigoidine, which is implicated in pathogenicity and protection from oxidative stress. Catalyzes the synthesis of the blue pigment using L-Gln as a substrate. Two glutamine molecules are cyclized and oxidized to form indigoidine. In Dickeya dadantii (strain 3937) (Erwinia chrysanthemi (strain 3937)), this protein is Indigoidine synthase.